The primary structure comprises 179 residues: Large ribosomal subunit protein uL5 (179 aa).

Belongs to the universal ribosomal protein uL5 family. As to quaternary structure, part of the 50S ribosomal subunit; part of the 5S rRNA/L5/L18/L25 subcomplex. Contacts the 5S rRNA and the P site tRNA. Forms a bridge to the 30S subunit in the 70S ribosome.

In terms of biological role, this is one of the proteins that bind and probably mediate the attachment of the 5S RNA into the large ribosomal subunit, where it forms part of the central protuberance. In the 70S ribosome it contacts protein S13 of the 30S subunit (bridge B1b), connecting the 2 subunits; this bridge is implicated in subunit movement. Contacts the P site tRNA; the 5S rRNA and some of its associated proteins might help stabilize positioning of ribosome-bound tRNAs. The protein is Large ribosomal subunit protein uL5 of Glaesserella parasuis serovar 5 (strain SH0165) (Haemophilus parasuis).